The sequence spans 1013 residues: Sodium/potassium-transporting ATPase subunit alpha-3 (1013 aa).

The segment at 1-24 (MGDKKDDKDSPKKNKGKERRDLDD) is disordered. The Cytoplasmic portion of the chain corresponds to 1-77 (MGDKKDDKDS…NALTPPPTTP (77 aa)). Phosphoserine is present on residues Ser-37 and Ser-56. Residues 72-74 (PPP) form an interaction with phosphoinositide-3 kinase region. The helical transmembrane segment at 78-98 (EWVKFCRQLFGGFSILLWIGA) threads the bilayer. Residues 99–121 (ILCFLAYGIQAGTEDDPSGDNLY) are Extracellular-facing. Residues 122-142 (LGIVLAAVVIITGCFSYYQEA) form a helical membrane-spanning segment. At 143–278 (KSSKIMESFK…VGKTPIAIEI (136 aa)) the chain is on the cytoplasmic side. A phosphoserine mark is found at Ser-218 and Ser-265. A helical transmembrane segment spans residues 279-298 (EHFIQLITGVAVFLGVSFFI). Residues 299–310 (LSLILGYTWLEA) are Extracellular-facing. The chain crosses the membrane as a helical span at residues 311-328 (VIFLIGIIVANVPEGLLA). Residues 329-762 (TVTVCLTLTA…EEGRLIFDNL (434 aa)) are Cytoplasmic-facing. Asp-366 serves as the catalytic 4-aspartylphosphate intermediate. Ser-442 carries the phosphoserine modification. Residue Tyr-548 is modified to Phosphotyrosine. Mg(2+) contacts are provided by Asp-707 and Asp-711. Residues 763-782 (KKSIAYTLTSNIPEITPFLL) form a helical membrane-spanning segment. Topologically, residues 783-792 (FIMANIPLPL) are extracellular. A helical transmembrane segment spans residues 793–813 (GTITILCIDLGTDMVPAISLA). The Cytoplasmic segment spans residues 814–833 (YEAAESDIMKRQPRNPRTDK). A helical transmembrane segment spans residues 834-856 (LVNERLISMAYGQIGMIQALGGF). Residues 857-908 (FSYFVILAENGFLPGNLVGIRLNWDDRTVNDLEDSYGQQWTYEQRKVVEFTC) lie on the Extracellular side of the membrane. Residues 909 to 928 (HTAFFVSIVVVQWADLIICK) traverse the membrane as a helical segment. The Cytoplasmic portion of the chain corresponds to 929-941 (TRRNSVFQQGMKN). Ser-933 carries the phosphoserine; by PKA modification. A helical transmembrane segment spans residues 942–960 (KILIFGLFEETALAAFLSY). Over 961-975 (CPGMDVALRMYPLKP) the chain is Extracellular. The chain crosses the membrane as a helical span at residues 976-996 (SWWFCAFPYSFLIFVYDEIRK). Over 997 to 1013 (LILRRNPGGWVEKETYY) the chain is Cytoplasmic.

Belongs to the cation transport ATPase (P-type) (TC 3.A.3) family. Type IIC subfamily. As to quaternary structure, the sodium/potassium-transporting ATPase is composed of a catalytic alpha subunit, an auxiliary non-catalytic beta subunit and an additional regulatory subunit. Interacts with regulatory subunit FXYD1.

It localises to the cell membrane. The catalysed reaction is K(+)(out) + Na(+)(in) + ATP + H2O = K(+)(in) + Na(+)(out) + ADP + phosphate + H(+). In terms of biological role, this is the catalytic component of the active enzyme, which catalyzes the hydrolysis of ATP coupled with the exchange of sodium and potassium ions across the plasma membrane. This action creates the electrochemical gradient of sodium and potassium ions, providing the energy for active transport of various nutrients. The polypeptide is Sodium/potassium-transporting ATPase subunit alpha-3 (ATP1A3) (Homo sapiens (Human)).